Here is a 277-residue protein sequence, read N- to C-terminus: MIKLGSHVSFKSPNYLYDSIKESIKNGANCAMIFLGAPQNTKRVDFEKYQYEKYLKDFSNLIKPEDIVVHAPYIINPASLEKADFAISFLSSEIKRMDKAKFKYLVLHPGFYGKNNVKDSLDQLARSIQKIFEITKDSNVEIMLETMSGKGSEVGKSYEEILYVIDKVKSPRLGACLDTCHVWDAGYNINDYQVFKDELIKTGILKHIKVIHLNDSKNELGSHKDRHANIDKGLIGLKNLKRIVHDPIFENIPIILETPWTEKGPIYDQEIAMLLEK.

Zn(2+) is bound by residues His70, His108, Glu145, Asp178, His181, His212, Asp225, His227, and Glu257.

This sequence belongs to the AP endonuclease 2 family. It depends on Zn(2+) as a cofactor.

The enzyme catalyses Endonucleolytic cleavage to 5'-phosphooligonucleotide end-products.. Functionally, endonuclease IV plays a role in DNA repair. It cleaves phosphodiester bonds at apurinic or apyrimidinic (AP) sites, generating a 3'-hydroxyl group and a 5'-terminal sugar phosphate. The chain is Probable endonuclease 4 from Mycoplasmopsis pulmonis (strain UAB CTIP) (Mycoplasma pulmonis).